The chain runs to 122 residues: Insulin-like 3 (122 aa).

Positions 1-15 (MRAPLLLMLLALGSA) are cleaved as a signal peptide. 3 disulfides stabilise this stretch: Cys29-Cys107, Cys41-Cys120, and Cys106-Cys111.

This sequence belongs to the insulin family. As to quaternary structure, heterodimer of a B chain and an A chain linked by two disulfide bonds. As to expression, expressed exclusively in Leydig cells of the testis.

The protein resides in the secreted. Functionally, seems to play a role in testicular function. May be a trophic hormone with a role in testicular descent in fetal life. Is a ligand for LGR8 receptor. This chain is Insulin-like 3 (Insl3), found in Mus musculus (Mouse).